Here is a 391-residue protein sequence, read N- to C-terminus: 3-ketoacyl-CoA thiolase (391 aa).

Cys-95 serves as the catalytic Acyl-thioester intermediate. Active-site proton acceptor residues include His-347 and Cys-377.

The protein belongs to the thiolase-like superfamily. Thiolase family. As to quaternary structure, heterotetramer of two alpha chains (FadB) and two beta chains (FadA).

It is found in the cytoplasm. The catalysed reaction is an acyl-CoA + acetyl-CoA = a 3-oxoacyl-CoA + CoA. The protein operates within lipid metabolism; fatty acid beta-oxidation. In terms of biological role, catalyzes the final step of fatty acid oxidation in which acetyl-CoA is released and the CoA ester of a fatty acid two carbons shorter is formed. This chain is 3-ketoacyl-CoA thiolase, found in Saccharophagus degradans (strain 2-40 / ATCC 43961 / DSM 17024).